Reading from the N-terminus, the 173-residue chain is Translationally-controlled tumor protein homolog (173 aa).

Residues 1–173 (MIIYKDILTG…WKHGLEEYKV (173 aa)) form the TCTP domain.

This sequence belongs to the TCTP family.

The protein localises to the cytoplasm. It localises to the cytoskeleton. Functionally, involved in protein synthesis. Involved in microtubule stabilization. The sequence is that of Translationally-controlled tumor protein homolog from Aspergillus oryzae (strain ATCC 42149 / RIB 40) (Yellow koji mold).